Consider the following 144-residue polypeptide: UPF0735 ACT domain-containing protein LCABL_12100 (144 aa).

An ACT domain is found at 68–143 (VISLMLHHDR…GVSDVHLVSV (76 aa)).

The protein belongs to the UPF0735 family.

This chain is UPF0735 ACT domain-containing protein LCABL_12100, found in Lacticaseibacillus casei (strain BL23) (Lactobacillus casei).